We begin with the raw amino-acid sequence, 316 residues long: Putative mannose-6-phosphate isomerase YvyI (316 aa).

The Zn(2+) site is built by histidine 98, glutamate 116, and histidine 173. Arginine 193 is an active-site residue.

It belongs to the mannose-6-phosphate isomerase type 1 family. Zn(2+) serves as cofactor.

The enzyme catalyses D-mannose 6-phosphate = D-fructose 6-phosphate. The sequence is that of Putative mannose-6-phosphate isomerase YvyI (yvyI) from Bacillus subtilis (strain 168).